A 371-amino-acid chain; its full sequence is Aldose sugar dehydrogenase YliI (371 aa).

Positions 1–20 (MHRQSFFLVPLICLSSALWA) are cleaved as a signal peptide. Q82 serves as a coordination point for pyrroloquinoline quinone. Residue H147 is the Proton acceptor of the active site. The PQQ stretch occupies residues 214 to 215 (RN). E240 and Y250 together coordinate Ca(2+). Y261 is a binding site for pyrroloquinoline quinone. 2 PQQ regions span residues 312 to 314 (ALK) and 341 to 343 (RIR).

The protein belongs to the PQQ oxidoreductase GdhB family. In terms of assembly, monomer. Ca(2+) is required as a cofactor. Pyrroloquinoline quinone serves as cofactor.

Its subcellular location is the cell outer membrane. In terms of biological role, aldose sugar dehydrogenase with broad substrate specificity. The physiological substrate is unknown. Can oxidize glucose to gluconolactone. Can also utilize D-arabinose, L-arabinose and 2-deoxy-glucose. Has higher activity towards oligomeric sugars, such as maltose, maltotriose or cellobiose. It may function to input sugar-derived electrons into the respiratory network. The protein is Aldose sugar dehydrogenase YliI (yliI) of Escherichia coli (strain K12).